The sequence spans 103 residues: Small ribosomal subunit protein uS10 (103 aa).

It belongs to the universal ribosomal protein uS10 family. In terms of assembly, part of the 30S ribosomal subunit.

Its function is as follows. Involved in the binding of tRNA to the ribosomes. This chain is Small ribosomal subunit protein uS10, found in Jannaschia sp. (strain CCS1).